A 310-amino-acid polypeptide reads, in one-letter code: Protein-L-isoaspartate O-methyltransferase (310 aa).

A disordered region spans residues M1–D41. The span at E14–E29 shows a compositional bias: basic and acidic residues. S157 is an active-site residue.

The protein belongs to the methyltransferase superfamily. L-isoaspartyl/D-aspartyl protein methyltransferase family.

Its subcellular location is the cytoplasm. It carries out the reaction [protein]-L-isoaspartate + S-adenosyl-L-methionine = [protein]-L-isoaspartate alpha-methyl ester + S-adenosyl-L-homocysteine. In terms of biological role, catalyzes the methyl esterification of L-isoaspartyl residues in peptides and proteins that result from spontaneous decomposition of normal L-aspartyl and L-asparaginyl residues. It plays a role in the repair and/or degradation of damaged proteins. The sequence is that of Protein-L-isoaspartate O-methyltransferase from Burkholderia cenocepacia (strain HI2424).